The following is a 318-amino-acid chain: Porphobilinogen deaminase (318 aa).

Residue Cys-241 is modified to S-(dipyrrolylmethanemethyl)cysteine.

This sequence belongs to the HMBS family. As to quaternary structure, monomer. Dipyrromethane serves as cofactor.

It carries out the reaction 4 porphobilinogen + H2O = hydroxymethylbilane + 4 NH4(+). Its pathway is porphyrin-containing compound metabolism; protoporphyrin-IX biosynthesis; coproporphyrinogen-III from 5-aminolevulinate: step 2/4. Its function is as follows. Tetrapolymerization of the monopyrrole PBG into the hydroxymethylbilane pre-uroporphyrinogen in several discrete steps. This is Porphobilinogen deaminase from Geotalea uraniireducens (strain Rf4) (Geobacter uraniireducens).